A 101-amino-acid chain; its full sequence is Small ribosomal subunit protein uS14 (101 aa).

It belongs to the universal ribosomal protein uS14 family. As to quaternary structure, part of the 30S ribosomal subunit. Contacts proteins S3 and S10.

Its function is as follows. Binds 16S rRNA, required for the assembly of 30S particles and may also be responsible for determining the conformation of the 16S rRNA at the A site. This chain is Small ribosomal subunit protein uS14, found in Francisella philomiragia subsp. philomiragia (strain ATCC 25017 / CCUG 19701 / FSC 153 / O#319-036).